The primary structure comprises 85 residues: Large ribosomal subunit protein bL27 (85 aa).

Residues 1–21 form a disordered region; it reads MAHKKGQGSTQNNRDSAGRRL.

This sequence belongs to the bacterial ribosomal protein bL27 family.

The polypeptide is Large ribosomal subunit protein bL27 (Nitratiruptor sp. (strain SB155-2)).